The sequence spans 870 residues: Elastin (870 aa).

The first 27 residues, 1–27, serve as a signal peptide directing secretion; it reads MAGLTAAVPQPGVLLILLLNLLHPAQP. Proline 39 and proline 75 each carry 4-hydroxyproline. At proline 87 the chain carries Hydroxyproline. Proline 105 carries the 4-hydroxyproline modification. Allysine occurs at positions 122 and 126. 4 positions are modified to 4-hydroxyproline: proline 207, proline 220, proline 223, and proline 244. An allysine mark is found at lysine 290 and lysine 309. 4-hydroxyproline is present on proline 338. 2 positions are modified to allysine: lysine 360 and lysine 363. At proline 375 the chain carries Hydroxyproline. Residues proline 402 and proline 408 each carry the 4-hydroxyproline modification. 2 positions are modified to hydroxyproline: proline 413 and proline 418. Allysine is present on residues lysine 434, lysine 438, lysine 441, lysine 485, and lysine 488. Proline 518 and proline 539 each carry 4-hydroxyproline. An allysine mark is found at lysine 554, lysine 558, lysine 615, lysine 619, and lysine 623. Proline 637, proline 646, proline 662, and proline 670 each carry 4-hydroxyproline. Residues lysine 677 and lysine 680 each carry the allysine modification. Proline 715 is subject to 4-hydroxyproline. An allysine mark is found at lysine 730, lysine 734, lysine 793, and lysine 796. Proline 842 is modified (4-hydroxyproline). Residues cysteine 860 and cysteine 865 are joined by a disulfide bond.

Belongs to the elastin family. As to quaternary structure, the polymeric elastin chains are cross-linked together into an extensible 3D network. Forms a ternary complex with BGN and MFAP2. Interacts with MFAP2 via divalent cations (calcium &gt; magnesium &gt; manganese) in a dose-dependent and saturating manner. Interacts with FBLN5 and FBN1. Forms a ternary complex with FBN1 and FBLN2 or FBLN5. Interacts with MFAP4 in a Ca (2+)-dependent manner; this interaction promotes ELN self-assembly. Interacts with EFEMP2 with moderate affinity. Elastin is formed through the cross-linking of its soluble precursor tropoelastin. Cross-linking is initiated through the action of lysyl oxidase on exposed lysines to form allysine. Subsequent spontaneous condensation reactions with other allysine or unmodified lysine residues result in various bi-, tri-, and tetrafunctional cross-links. The most abundant cross-links in mature elastin fibers are lysinonorleucine, allysine aldol, desmosine, and isodesmosine. Post-translationally, hydroxylation on proline residues within the sequence motif, GXPG, is most likely to be 4-hydroxy as this fits the requirement for 4-hydroxylation in vertebrates.

It localises to the secreted. The protein resides in the extracellular space. It is found in the extracellular matrix. Functionally, major structural protein of tissues such as aorta and nuchal ligament, which must expand rapidly and recover completely. Molecular determinant of the late arterial morphogenesis, stabilizing arterial structure by regulating proliferation and organization of vascular smooth muscle. The protein is Elastin (Eln) of Rattus norvegicus (Rat).